Consider the following 207-residue polypeptide: Large ribosomal subunit protein uL4 (207 aa).

The disordered stretch occupies residues 47–78; the sequence is GTHKVKNRSEVRGGGRKPWRQKGTGRARQGSI. A compositionally biased stretch (basic residues) spans 60–71; it reads GGRKPWRQKGTG.

It belongs to the universal ribosomal protein uL4 family. Part of the 50S ribosomal subunit.

Its function is as follows. One of the primary rRNA binding proteins, this protein initially binds near the 5'-end of the 23S rRNA. It is important during the early stages of 50S assembly. It makes multiple contacts with different domains of the 23S rRNA in the assembled 50S subunit and ribosome. In terms of biological role, forms part of the polypeptide exit tunnel. This chain is Large ribosomal subunit protein uL4, found in Listeria innocua serovar 6a (strain ATCC BAA-680 / CLIP 11262).